The primary structure comprises 261 residues: Cytochrome c oxidase subunit 3 (261 aa).

Residues 1–15 (MTHQTHAYHMVNPSP) are Mitochondrial matrix-facing. A helical transmembrane segment spans residues 16–34 (WPLTGALSALLMSSGLTMW). The Mitochondrial intermembrane segment spans residues 35–40 (FHFNSL). Residues 41 to 66 (ILLTTGLVTNILTMYQWWRDVIREST) form a helical membrane-spanning segment. Topologically, residues 67-72 (FQGHHT) are mitochondrial matrix. A helical transmembrane segment spans residues 73 to 105 (PVVQKGLRYGMVLFIISEVLFFTGFFWAFYHSS). At 106–128 (LAPTPELGGCWPPTGINPLNPLE) the chain is on the mitochondrial intermembrane side. A helical membrane pass occupies residues 129-152 (VPLLNTSVLLASGVSITWAHHSLM). At 153 to 155 (EGN) the chain is on the mitochondrial matrix side. Residues 156–183 (RKQMLQALFITIALGVYFTLLQASEYHE) form a helical membrane-spanning segment. Residues 184-190 (ASFTISD) lie on the Mitochondrial intermembrane side of the membrane. The helical transmembrane segment at 191–223 (GVYGSTFFVATGFHGLHVIIGSTFLIVCFLRQL) threads the bilayer. The Mitochondrial matrix segment spans residues 224–232 (KFHFTSDHH). A helical transmembrane segment spans residues 233 to 256 (FGFEAAAWYWHFVDVVWLFLYVSI). Topologically, residues 257-261 (YWWGS) are mitochondrial intermembrane.

It belongs to the cytochrome c oxidase subunit 3 family. In terms of assembly, component of the cytochrome c oxidase (complex IV, CIV), a multisubunit enzyme composed of 14 subunits. The complex is composed of a catalytic core of 3 subunits MT-CO1, MT-CO2 and MT-CO3, encoded in the mitochondrial DNA, and 11 supernumerary subunits COX4I, COX5A, COX5B, COX6A, COX6B, COX6C, COX7A, COX7B, COX7C, COX8 and NDUFA4, which are encoded in the nuclear genome. The complex exists as a monomer or a dimer and forms supercomplexes (SCs) in the inner mitochondrial membrane with NADH-ubiquinone oxidoreductase (complex I, CI) and ubiquinol-cytochrome c oxidoreductase (cytochrome b-c1 complex, complex III, CIII), resulting in different assemblies (supercomplex SCI(1)III(2)IV(1) and megacomplex MCI(2)III(2)IV(2)).

The protein resides in the mitochondrion inner membrane. It carries out the reaction 4 Fe(II)-[cytochrome c] + O2 + 8 H(+)(in) = 4 Fe(III)-[cytochrome c] + 2 H2O + 4 H(+)(out). Functionally, component of the cytochrome c oxidase, the last enzyme in the mitochondrial electron transport chain which drives oxidative phosphorylation. The respiratory chain contains 3 multisubunit complexes succinate dehydrogenase (complex II, CII), ubiquinol-cytochrome c oxidoreductase (cytochrome b-c1 complex, complex III, CIII) and cytochrome c oxidase (complex IV, CIV), that cooperate to transfer electrons derived from NADH and succinate to molecular oxygen, creating an electrochemical gradient over the inner membrane that drives transmembrane transport and the ATP synthase. Cytochrome c oxidase is the component of the respiratory chain that catalyzes the reduction of oxygen to water. Electrons originating from reduced cytochrome c in the intermembrane space (IMS) are transferred via the dinuclear copper A center (CU(A)) of subunit 2 and heme A of subunit 1 to the active site in subunit 1, a binuclear center (BNC) formed by heme A3 and copper B (CU(B)). The BNC reduces molecular oxygen to 2 water molecules using 4 electrons from cytochrome c in the IMS and 4 protons from the mitochondrial matrix. In Hippopotamus amphibius (Hippopotamus), this protein is Cytochrome c oxidase subunit 3 (MT-CO3).